We begin with the raw amino-acid sequence, 150 residues long: Putative ribosome maturation factor RimP (150 aa).

It belongs to the RimP family.

The protein resides in the cytoplasm. Required for maturation of 30S ribosomal subunits. The sequence is that of Putative ribosome maturation factor RimP from Mycobacterium leprae (strain TN).